Here is a 401-residue protein sequence, read N- to C-terminus: Ribosomal RNA large subunit methyltransferase G (401 aa).

It belongs to the methyltransferase superfamily. RlmG family.

Its subcellular location is the cytoplasm. The catalysed reaction is guanosine(1835) in 23S rRNA + S-adenosyl-L-methionine = N(2)-methylguanosine(1835) in 23S rRNA + S-adenosyl-L-homocysteine + H(+). Its function is as follows. Specifically methylates the guanine in position 1835 (m2G1835) of 23S rRNA. This chain is Ribosomal RNA large subunit methyltransferase G, found in Shewanella loihica (strain ATCC BAA-1088 / PV-4).